The chain runs to 261 residues: UPF0246 protein Reut_A1014 (261 aa).

Belongs to the UPF0246 family.

This chain is UPF0246 protein Reut_A1014, found in Cupriavidus pinatubonensis (strain JMP 134 / LMG 1197) (Cupriavidus necator (strain JMP 134)).